The chain runs to 469 residues: 3-isopropylmalate dehydratase large subunit (469 aa).

Residues cysteine 350, cysteine 410, and cysteine 413 each contribute to the [4Fe-4S] cluster site.

Belongs to the aconitase/IPM isomerase family. LeuC type 1 subfamily. Heterodimer of LeuC and LeuD. The cofactor is [4Fe-4S] cluster.

It carries out the reaction (2R,3S)-3-isopropylmalate = (2S)-2-isopropylmalate. It participates in amino-acid biosynthesis; L-leucine biosynthesis; L-leucine from 3-methyl-2-oxobutanoate: step 2/4. Its function is as follows. Catalyzes the isomerization between 2-isopropylmalate and 3-isopropylmalate, via the formation of 2-isopropylmaleate. The sequence is that of 3-isopropylmalate dehydratase large subunit from Rhizobium etli (strain ATCC 51251 / DSM 11541 / JCM 21823 / NBRC 15573 / CFN 42).